The primary structure comprises 418 residues: 3-deoxy-D-manno-octulosonic acid transferase (418 aa).

A helical; Signal-anchor membrane pass occupies residues 7-27; it reads FLSFLLLPIYFVIIFIRLLIG. Glu60 (proton acceptor) is an active-site residue. CMP is bound by residues 264 to 265, 305 to 307, and 330 to 333; these read PR, FGE, and NILE.

The protein belongs to the glycosyltransferase group 1 family. Glycosyltransferase 30 subfamily.

The protein localises to the cell inner membrane. The catalysed reaction is lipid IVA (E. coli) + CMP-3-deoxy-beta-D-manno-octulosonate = alpha-Kdo-(2-&gt;6)-lipid IVA (E. coli) + CMP + H(+). It functions in the pathway bacterial outer membrane biogenesis; LPS core biosynthesis. Involved in lipopolysaccharide (LPS) biosynthesis. Catalyzes the transfer of 3-deoxy-D-manno-octulosonate (Kdo) residue(s) from CMP-Kdo to lipid IV(A), the tetraacyldisaccharide-1,4'-bisphosphate precursor of lipid A. This chain is 3-deoxy-D-manno-octulosonic acid transferase (waaA), found in Rickettsia bellii (strain RML369-C).